We begin with the raw amino-acid sequence, 561 residues long: Glutamine--tRNA ligase (561 aa).

Residues 34 to 44 carry the 'HIGH' region motif; that stretch reads PEPNGYLHIGH. ATP is bound by residues 35–37 and 41–47; these read EPN and HIGHAKS. Positions 67 and 212 each coordinate L-glutamine. Residues T231, 261-262, and 269-271 each bind ATP; these read RL and MSK. The 'KMSKS' region signature appears at 268 to 272; the sequence is VMSKR.

The protein belongs to the class-I aminoacyl-tRNA synthetase family. Monomer.

It is found in the cytoplasm. The catalysed reaction is tRNA(Gln) + L-glutamine + ATP = L-glutaminyl-tRNA(Gln) + AMP + diphosphate. The protein is Glutamine--tRNA ligase of Idiomarina loihiensis (strain ATCC BAA-735 / DSM 15497 / L2-TR).